A 233-amino-acid polypeptide reads, in one-letter code: Cytidylate kinase (233 aa).

15 to 23 provides a ligand contact to ATP; the sequence is GPSGAGKSS. Residues 183–200 are compositionally biased toward basic and acidic residues; that stretch reads QRDRQDEGREHAPLKQAE. The segment at 183–203 is disordered; sequence QRDRQDEGREHAPLKQAEDAV.

Belongs to the cytidylate kinase family. Type 1 subfamily.

It localises to the cytoplasm. The enzyme catalyses CMP + ATP = CDP + ADP. The catalysed reaction is dCMP + ATP = dCDP + ADP. The protein is Cytidylate kinase of Geobacter sp. (strain M21).